A 404-amino-acid chain; its full sequence is Glucose-1-phosphate adenylyltransferase 2 (404 aa).

Alpha-D-glucose 1-phosphate-binding positions include Y97, G162, 177 to 178 (EK), and S195.

The protein belongs to the bacterial/plant glucose-1-phosphate adenylyltransferase family. As to quaternary structure, homotetramer.

It catalyses the reaction alpha-D-glucose 1-phosphate + ATP + H(+) = ADP-alpha-D-glucose + diphosphate. Its pathway is glycan biosynthesis; glycogen biosynthesis. Functionally, involved in the biosynthesis of ADP-glucose, a building block required for the elongation reactions to produce glycogen. Catalyzes the reaction between ATP and alpha-D-glucose 1-phosphate (G1P) to produce pyrophosphate and ADP-Glc. This is Glucose-1-phosphate adenylyltransferase 2 from Vibrio vulnificus (strain YJ016).